A 168-amino-acid chain; its full sequence is ATP synthase subunit b (168 aa).

The helical transmembrane segment at 9–29 (SIPFGTIAYTLFIFLLLLVML) threads the bilayer.

Belongs to the ATPase B chain family. F-type ATPases have 2 components, F(1) - the catalytic core - and F(0) - the membrane proton channel. F(1) has five subunits: alpha(3), beta(3), gamma(1), delta(1), epsilon(1). F(0) has three main subunits: a(1), b(2) and c(10-14). The alpha and beta chains form an alternating ring which encloses part of the gamma chain. F(1) is attached to F(0) by a central stalk formed by the gamma and epsilon chains, while a peripheral stalk is formed by the delta and b chains.

The protein resides in the cell membrane. F(1)F(0) ATP synthase produces ATP from ADP in the presence of a proton or sodium gradient. F-type ATPases consist of two structural domains, F(1) containing the extramembraneous catalytic core and F(0) containing the membrane proton channel, linked together by a central stalk and a peripheral stalk. During catalysis, ATP synthesis in the catalytic domain of F(1) is coupled via a rotary mechanism of the central stalk subunits to proton translocation. In terms of biological role, component of the F(0) channel, it forms part of the peripheral stalk, linking F(1) to F(0). The sequence is that of ATP synthase subunit b from Bacillus cereus (strain B4264).